Here is a 94-residue protein sequence, read N- to C-terminus: Large ribosomal subunit protein bL27 (94 aa).

The propeptide occupies 1–9 (MLKMNLQFF).

Belongs to the bacterial ribosomal protein bL27 family. Post-translationally, the N-terminus is cleaved by ribosomal processing cysteine protease Prp.

In Halalkalibacterium halodurans (strain ATCC BAA-125 / DSM 18197 / FERM 7344 / JCM 9153 / C-125) (Bacillus halodurans), this protein is Large ribosomal subunit protein bL27.